We begin with the raw amino-acid sequence, 475 residues long: ATP synthase subunit beta (475 aa).

Residue 154-161 (GGAGVGKT) coordinates ATP.

This sequence belongs to the ATPase alpha/beta chains family. F-type ATPases have 2 components, CF(1) - the catalytic core - and CF(0) - the membrane proton channel. CF(1) has five subunits: alpha(3), beta(3), gamma(1), delta(1), epsilon(1). CF(0) has three main subunits: a(1), b(2) and c(9-12). The alpha and beta chains form an alternating ring which encloses part of the gamma chain. CF(1) is attached to CF(0) by a central stalk formed by the gamma and epsilon chains, while a peripheral stalk is formed by the delta and b chains.

It localises to the cell inner membrane. It carries out the reaction ATP + H2O + 4 H(+)(in) = ADP + phosphate + 5 H(+)(out). Functionally, produces ATP from ADP in the presence of a proton gradient across the membrane. The catalytic sites are hosted primarily by the beta subunits. The polypeptide is ATP synthase subunit beta (Hyphomonas neptunium (strain ATCC 15444)).